Here is a 489-residue protein sequence, read N- to C-terminus: Betaine aldehyde dehydrogenase (489 aa).

The K(+) site is built by threonine 26 and aspartate 93. Position 150 to 152 (150 to 152 (GAW)) interacts with NAD(+). The Charge relay system role is filled by lysine 162. 176–179 (KPSE) contributes to the NAD(+) binding site. A K(+)-binding site is contributed by valine 180. 229–232 (GVET) contributes to the NAD(+) binding site. Leucine 245 is a binding site for K(+). Glutamate 251 (proton acceptor) is an active-site residue. Residues glycine 253, cysteine 285, and glutamate 386 each coordinate NAD(+). Cysteine 285 serves as the catalytic Nucleophile. Cysteine sulfenic acid (-SOH) is present on cysteine 285. Lysine 456 and glycine 459 together coordinate K(+). The active-site Charge relay system is the glutamate 463.

Belongs to the aldehyde dehydrogenase family. Dimer of dimers. K(+) serves as cofactor.

The catalysed reaction is betaine aldehyde + NAD(+) + H2O = glycine betaine + NADH + 2 H(+). It participates in amine and polyamine biosynthesis; betaine biosynthesis via choline pathway; betaine from betaine aldehyde: step 1/1. Functionally, involved in the biosynthesis of the osmoprotectant glycine betaine. Catalyzes the irreversible oxidation of betaine aldehyde to the corresponding acid. This Burkholderia orbicola (strain MC0-3) protein is Betaine aldehyde dehydrogenase.